Consider the following 565-residue polypeptide: Ubiquitin carboxyl-terminal hydrolase 39 (565 aa).

2 stretches are compositionally biased toward basic and acidic residues: residues 1–21 and 28–39; these read MSGR…ESES and VKRERDREREPE. 2 disordered regions span residues 1-61 and 75-95; these read MSGR…SARE and EREV…NGRV. Ser46 is subject to Phosphoserine. Lys51 participates in a covalent cross-link: Glycyl lysine isopeptide (Lys-Gly) (interchain with G-Cter in SUMO2). At Ser82 the chain carries Phosphoserine. Residues 85–95 are compositionally biased toward basic and acidic residues; the sequence is EREVRAKNGRV. A UBP-type; degenerate zinc finger spans residues 103 to 200; it reads RHCPYLDTIN…YVLKPTFTKQ (98 aa). Cys136, Cys139, His155, and His161 together coordinate Zn(2+). The USP domain maps to 225-555; that stretch reads VGLNNIKAND…EAYIQIWKRR (331 aa).

The protein belongs to the peptidase C19 family. The U4/U6-U5 tri-snRNP complex is a building block of the precatalytic spliceosome (spliceosome B complex). Component of the U4/U6-U5 tri-snRNP complex composed of the U4, U6 and U5 snRNAs and at least PRPF3, PRPF4, PRPF6, PRPF8, PRPF31, SNRNP200, TXNL4A, SNRNP40, SNRPB, SNRPD1, SNRPD2, SNRPD3, SNRPE, SNRPF, SNRPG, DDX23, CD2BP2, PPIH, SNU13, EFTUD2, SART1 and USP39, plus LSM2, LSM3, LSM4, LSM5, LSM6, LSM7 and LSM8.

The protein resides in the nucleus. It catalyses the reaction Thiol-dependent hydrolysis of ester, thioester, amide, peptide and isopeptide bonds formed by the C-terminal Gly of ubiquitin (a 76-residue protein attached to proteins as an intracellular targeting signal).. In terms of biological role, deubiquitinating enzyme that plays a role in many cellular processes including cellular antiviral response, epithelial morphogenesis, DNA repair or B-cell development. Plays a role in pre-mRNA splicing as a component of the U4/U6-U5 tri-snRNP, one of the building blocks of the precatalytic spliceosome. Specifically regulates immunoglobulin gene rearrangement in a spliceosome-dependent manner, which involves modulating chromatin interactions at the Igh locus and therefore plays an essential role in B-cell development. Regulates AURKB mRNA levels, and thereby plays a role in cytokinesis and in the spindle checkpoint. Regulates apoptosis and G2/M cell cycle checkpoint in response to DNA damage by deubiquitinating and stabilizing CHK2. Also plays an important role in DNA repair by controlling the recruitment of XRCC4/LIG4 to DNA double-strand breaks for non-homologous end-joining repair. Participates in antiviral activity by affecting the type I IFN signaling by stabilizing STAT1 and decreasing its 'Lys-6'-linked ubiquitination. Contributes to non-canonical Wnt signaling during epidermal differentiation. Acts as a negative regulator NF-kappa-B activation through deubiquitination of 'Lys-48'-linked ubiquitination of NFKBIA. The protein is Ubiquitin carboxyl-terminal hydrolase 39 of Homo sapiens (Human).